A 360-amino-acid chain; its full sequence is DNA ADP-ribosyl glycohydrolase (360 aa).

The region spanning 1–155 (MLRFVRGNLL…VYEPVENPKA (155 aa)) is the Macro domain. ADP-D-ribose is bound by residues 8–9 (NL), 20–22 (TVN), 31–34 (VALQ), and Thr-79. Lys-80 functions as the Nucleophile in the catalytic mechanism. Residue 117 to 121 (GAGNG) participates in ADP-D-ribose binding. The interaction with DarT stretch occupies residues 167–338 (LTPARAALLK…VALDALLKRG (172 aa)).

This sequence belongs to the DarG ADP-ribosyl glycohydrolase family. Interacts (via C-terminus) with cognate toxin DarT; this heterodimeric complex neutralizes the toxic effect of DarT by preventing ssDNA binding to DarT and consequently inactivating the toxin by direct protein-protein interactions.

It carries out the reaction an N-(ADP-alpha-D-ribosyl)-thymidine in DNA + H2O = a thymidine in DNA + ADP-D-ribose. Functionally, antitoxin component of the hybrid type II/IV toxin-antitoxin (TA) system DarTG, which plays a crucial role in controlling bacterial growth and bacteriophage infection. De-ADP-ribosylates DNA modified on thymidine by its cognate toxin DarT, which neutralizes the activity of cognate toxin DarT. Upon expression in E.coli neutralizes the effect of cognate toxin DarT. Upon expression in M.tuberculosis neutralizes the toxic effects of endogenous DarT. This is DNA ADP-ribosyl glycohydrolase from Thermus aquaticus (strain ATCC BAA-2747 / Y51MC23).